A 696-amino-acid chain; its full sequence is Polyribonucleotide nucleotidyltransferase (696 aa).

Mg(2+) is bound by residues D489 and D495. One can recognise a KH domain in the interval 556-615 (PQYVTMKINPEKIRDVIGKGGVVIREITEATNCAIDISDDGTIKIAAHTTEEGEAAKRRI). The region spanning 625-693 (GKVYEGTVVK…RQGRVRLSMK (69 aa)) is the S1 motif domain.

Belongs to the polyribonucleotide nucleotidyltransferase family. As to quaternary structure, component of the RNA degradosome, which is a multiprotein complex involved in RNA processing and mRNA degradation. The cofactor is Mg(2+).

It localises to the cytoplasm. The catalysed reaction is RNA(n+1) + phosphate = RNA(n) + a ribonucleoside 5'-diphosphate. Its function is as follows. Involved in mRNA degradation. Catalyzes the phosphorolysis of single-stranded polyribonucleotides processively in the 3'- to 5'-direction. In Coxiella burnetii (strain CbuK_Q154) (Coxiella burnetii (strain Q154)), this protein is Polyribonucleotide nucleotidyltransferase.